A 367-amino-acid chain; its full sequence is MTPDILPTDGYEHQLAEKSARLQAMMSPFQAPAAEIFRSPAEHYRMRAEFRVWHDEDDLYHIMFDQQTKLRIRVEQFPVASLLINRLMSALMTAIRAEPILRHKLFQIDYLSTLSGKLLATLLYHRPLDEEWQQKARELRDQLREQGFDLQLIGRASKTKIMLDHDYIDEVLPVAGRDMIYRQVENSFTQPNAAVNIHMLEWAIDVTQHASGDLLELYCGNGNFSLALARNFDRVLATEIAKPSVAAAQYNIAANHIDNVQIIRMSAEEFTQAMQGVREFNRLKGIDLTSYNCETIFVDPPRSGLDDETVKLVQAYPRILYISCNPETLCANLEQLQYTHKISRLALFDQFPYTHHMECGVLLEKRD.

S-adenosyl-L-methionine is bound by residues Gln190, Tyr218, Asn223, Glu239, and Asp299. Cys324 (nucleophile) is an active-site residue. Glu358 (proton acceptor) is an active-site residue.

The protein belongs to the class I-like SAM-binding methyltransferase superfamily. RNA M5U methyltransferase family. TrmA subfamily.

The catalysed reaction is uridine(54) in tRNA + S-adenosyl-L-methionine = 5-methyluridine(54) in tRNA + S-adenosyl-L-homocysteine + H(+). It catalyses the reaction uridine(341) in tmRNA + S-adenosyl-L-methionine = 5-methyluridine(341) in tmRNA + S-adenosyl-L-homocysteine + H(+). Dual-specificity methyltransferase that catalyzes the formation of 5-methyluridine at position 54 (m5U54) in all tRNAs, and that of position 341 (m5U341) in tmRNA (transfer-mRNA). This Yersinia enterocolitica serotype O:8 / biotype 1B (strain NCTC 13174 / 8081) protein is tRNA/tmRNA (uracil-C(5))-methyltransferase.